Consider the following 691-residue polypeptide: WD repeat-containing protein 48 homolog (691 aa).

WD repeat units lie at residues 27–82, 88–130, 133–168, 180–219, 222–261, 264–303, 306–347, and 399–438; these read LHRS…PVQY, RHTD…YLDS, LHTD…NSNF, GCKN…KPMK, GHSD…NIAT, AHEE…KFQV, KEEA…QNSN, and SGAP…KVKE.

The protein belongs to the WD repeat WDR48 family. Interacts with usp-46; the interaction increases the catalytic activity of usp-46 in the presence of wdr-20.

Functionally, together with wdr-20, binds to and stimulates the activity of the deubiquitinating enzyme usp-46, leading to deubiquitination and stabilization of the glr-1 glutamate receptor. The polypeptide is WD repeat-containing protein 48 homolog (wdr-48) (Caenorhabditis briggsae).